Reading from the N-terminus, the 115-residue chain is Holo-[acyl-carrier-protein] synthase (115 aa).

The Mg(2+) site is built by Asp8 and Glu56.

It belongs to the P-Pant transferase superfamily. AcpS family. Mg(2+) serves as cofactor.

Its subcellular location is the cytoplasm. The catalysed reaction is apo-[ACP] + CoA = holo-[ACP] + adenosine 3',5'-bisphosphate + H(+). Its function is as follows. Transfers the 4'-phosphopantetheine moiety from coenzyme A to a Ser of acyl-carrier-protein. This Ureaplasma parvum serovar 3 (strain ATCC 27815 / 27 / NCTC 11736) protein is Holo-[acyl-carrier-protein] synthase.